The following is a 288-amino-acid chain: Peptidyl-tRNA hydrolase, chloroplastic (288 aa).

A chloroplast-targeting transit peptide spans 1-55; the sequence is MKAVAFPAKIANLSFPSNCCSLFFRSPATFLSPALPCRKLTKGIRGLEGLMSQCL. Y107 is a tRNA binding site. The Proton acceptor role is filled by H112. F157, N159, and N205 together coordinate tRNA.

The protein belongs to the PTH family. In terms of assembly, monomer.

It localises to the plastid. It is found in the chloroplast stroma. It catalyses the reaction an N-acyl-L-alpha-aminoacyl-tRNA + H2O = an N-acyl-L-amino acid + a tRNA + H(+). Functionally, the natural substrate for this enzyme may be peptidyl-tRNAs which drop off the ribosome during protein synthesis. This Arabidopsis thaliana (Mouse-ear cress) protein is Peptidyl-tRNA hydrolase, chloroplastic.